A 440-amino-acid polypeptide reads, in one-letter code: Adenylyltransferase and sulfurtransferase UBA4 (440 aa).

M1 is modified (N-acetylmethionine). ATP contacts are provided by residues G77, D98, 105 to 109 (SNLHR), K122, and 166 to 167 (DS). Zn(2+)-binding residues include C208 and C211. Residue C225 is the Glycyl thioester intermediate; for adenylyltransferase activity of the active site. Residues C286 and C289 each coordinate Zn(2+). At S326 the chain carries Phosphoserine. One can recognise a Rhodanese domain in the interval 339–438 (FLAKHIFLDV…YIDDIDQTIP (100 aa)). C397 serves as the catalytic Cysteine persulfide intermediate; for sulfurtransferase activity.

In the N-terminal section; belongs to the HesA/MoeB/ThiF family. UBA4 subfamily. The cofactor is Zn(2+).

The protein localises to the cytoplasm. Its subcellular location is the cytosol. Its pathway is tRNA modification; 5-methoxycarbonylmethyl-2-thiouridine-tRNA biosynthesis. Its function is as follows. Plays a central role in 2-thiolation of mcm(5)S(2)U at tRNA wobble positions of cytosolic tRNA(Lys), tRNA(Glu) and tRNA(Gln). Acts by mediating the C-terminal thiocarboxylation of sulfur carrier URM1. Its N-terminus first activates URM1 as acyl-adenylate (-COAMP), then the persulfide sulfur on the catalytic cysteine is transferred to URM1 to form thiocarboxylation (-COSH) of its C-terminus. The reaction probably involves hydrogen sulfide that is generated from the persulfide intermediate and that acts as a nucleophile towards URM1. Subsequently, a transient disulfide bond is formed. Does not use thiosulfate as sulfur donor; NFS1 probably acting as a sulfur donor for thiocarboxylation reactions. Prior mcm(5) tRNA modification by the elongator complex is required for 2-thiolation. May also be involved in protein urmylation. This is Adenylyltransferase and sulfurtransferase UBA4 from Saccharomyces cerevisiae (strain RM11-1a) (Baker's yeast).